The following is a 275-amino-acid chain: Large ribosomal subunit protein uL2 (275 aa).

The segment at 223 to 275 (AAMNANDHPHGGGEAKAGQGNPHPVTPWGVPTKGYKTRKNKRTQQFIVRDRRG) is disordered.

The protein belongs to the universal ribosomal protein uL2 family. Part of the 50S ribosomal subunit. Forms a bridge to the 30S subunit in the 70S ribosome.

Its function is as follows. One of the primary rRNA binding proteins. Required for association of the 30S and 50S subunits to form the 70S ribosome, for tRNA binding and peptide bond formation. It has been suggested to have peptidyltransferase activity; this is somewhat controversial. Makes several contacts with the 16S rRNA in the 70S ribosome. The protein is Large ribosomal subunit protein uL2 of Xanthomonas campestris pv. campestris (strain 8004).